Consider the following 312-residue polypeptide: Porphobilinogen deaminase (312 aa).

The residue at position 241 (cysteine 241) is an S-(dipyrrolylmethanemethyl)cysteine.

It belongs to the HMBS family. In terms of assembly, monomer. The cofactor is dipyrromethane.

It carries out the reaction 4 porphobilinogen + H2O = hydroxymethylbilane + 4 NH4(+). It functions in the pathway porphyrin-containing compound metabolism; protoporphyrin-IX biosynthesis; coproporphyrinogen-III from 5-aminolevulinate: step 2/4. The protein operates within porphyrin-containing compound metabolism; chlorophyll biosynthesis. In terms of biological role, tetrapolymerization of the monopyrrole PBG into the hydroxymethylbilane pre-uroporphyrinogen in several discrete steps. This chain is Porphobilinogen deaminase, found in Chlorobaculum tepidum (strain ATCC 49652 / DSM 12025 / NBRC 103806 / TLS) (Chlorobium tepidum).